Here is a 481-residue protein sequence, read N- to C-terminus: Matrix metalloproteinase-20 (481 aa).

The signal sequence occupies residues 1–20 (MLPASGLAVLLVTALKFSTA). A propeptide spanning residues 21–105 (APSLPAASPR…PRCGVPDVAN (85 aa)) is cleaved from the precursor. N-linked (GlcNAc...) asparagine glycosylation is present at Asn64. The short motif at 96–103 (PRCGVPDV) is the Cysteine switch element. Cys98 provides a ligand contact to Zn(2+). Residues Glu162, Ala163, and Asp164 each contribute to the Ca(2+) site. Residues His174 and Asp176 each coordinate Zn(2+). Ca(2+) contacts are provided by Asp181, Gly182, Arg184, and Thr186. His189 is a binding site for Zn(2+). Residues Glu195, Gly196, Gly198, and Asp200 each contribute to the Ca(2+) site. Position 202 (His202) interacts with Zn(2+). Residues Asp204 and Glu207 each coordinate Ca(2+). His224 provides a ligand contact to Zn(2+). Glu225 is a catalytic residue. Zn(2+) is bound by residues His228 and His234. Hemopexin repeat units follow at residues 291 to 341 (PDLC…FPQL), 342 to 387 (MSNV…GFPR), 389 to 437 (VQRI…FSGV), and 438 to 481 (NGQI…WIGC). Cys294 and Cys481 are oxidised to a cystine. Residue Asn297 is glycosylated (N-linked (GlcNAc...) asparagine).

This sequence belongs to the peptidase M10A family. The cofactor is Zn(2+). Ca(2+) serves as cofactor. Post-translationally, autoactivates at least at the 105-Asn-|-Tyr-106 site. Expressed in the enamel organ.

The protein localises to the secreted. It localises to the extracellular space. The protein resides in the extracellular matrix. Degrades amelogenin, the major protein component of the enamel matrix and two of the macromolecules characterizing the cartilage extracellular matrix: aggrecan and the cartilage oligomeric matrix protein (COMP). May play a central role in tooth enamel formation. Cleaves aggrecan at the '360-Ser-|-Phe-361' site. In Bos taurus (Bovine), this protein is Matrix metalloproteinase-20 (MMP20).